A 443-amino-acid chain; its full sequence is Threonine/serine transporter TdcC (443 aa).

Helical transmembrane passes span 22 to 42, 44 to 64, 97 to 117, 140 to 160, 163 to 183, 207 to 227, 259 to 279, 319 to 339, 366 to 386, 389 to 409, and 423 to 443; these read TTWTLGLFGTAIGAGVLFFPI, AGFGGLIPILLMLVLAYPIAF, GVVITFLYFFAICPLLWIYGV, FVALFLLLLMAFVIWFGKDLM, VMSYLVWPFIASLVLISLSLI, ILVTVWLGISIMVFSFNFSPI, ASMLMVAVVMFFAFSCLFTLS, ASIIALVAIFKSFFGHYLGTL, ISMIFIMGSTWVVAYANPNIL, IEAMGAPIIASLLCLLPMYAI, and DNVFVTLIGLLTILNIVYKLF.

Belongs to the amino acid/polyamine transporter 2 family. SdaC/TdcC subfamily.

It is found in the cell inner membrane. The enzyme catalyses L-threonine(in) + H(+)(in) = L-threonine(out) + H(+)(out). It catalyses the reaction L-serine(in) + H(+)(in) = L-serine(out) + H(+)(out). In terms of biological role, involved in the import of threonine and serine into the cell, with the concomitant import of a proton (symport system). The sequence is that of Threonine/serine transporter TdcC from Salmonella paratyphi A (strain ATCC 9150 / SARB42).